The following is a 525-amino-acid chain: Protein shisa-6 (525 aa).

Positions Met1 to Ala30 are cleaved as a signal peptide. At Ala31–Thr180 the chain is on the extracellular side. Residues Asn37 and Asn62 are each glycosylated (N-linked (GlcNAc...) asparagine). A helical membrane pass occupies residues Asn181–Ala201. Residues Lys202–Val525 are Cytoplasmic-facing. Positions Ile241–Pro294 are disordered. Residues Ala243–His261 show a composition bias toward polar residues. Phosphoserine occurs at positions 416, 422, and 434. Residue Thr458 is modified to Phosphothreonine. The interval Met469–Phe495 is disordered. Residues Pro473–Ala489 show a composition bias toward polar residues. Thr502 is modified (phosphothreonine). The PDZ-binding motif lies at Glu522–Val525.

It belongs to the shisa family. As to quaternary structure, component of the postsynaptic hippocampal AMPA-type glutamate receptor (AMPAR) complex, at least composed of pore forming AMPAR subunits GRIA1, GRIA2 and GRIA3 and AMPAR auxiliary proteins SHISA6 and SHISA7. Interacts (via PDZ-binding motif) with DLG4/PSD-95 (via PDZ domain); the interaction is direct. In terms of processing, N-glycosylated. Highly expressed in cerebellum and hippocampal neurons: CA1 stratum oriens and stratum radiatum, CA3 stratum oriens and stratum lucidum, and the dentate gyrus polymorphic layer. Expressed in other brain structures including olfactory bulb, cortex, amygdala and midbrain (at protein level). Also expressed in a subset of spermatogonial stem cells. Also expressed in eye, heart, kidney, lung, muscle and spleen. Isoform 2: Specifically expressed in hippocampus.

It is found in the postsynaptic density membrane. Its function is as follows. Involved in maintenance of high-frequency synaptic transmission at hippocampal CA3-CA1 synapses. Regulates AMPA-type glutamate receptor (AMPAR) immobilization at postsynaptic density keeping the channels in an activated state in the presence of glutamate and preventing synaptic depression. May play a role in self-renewal and differentiation of spermatogonial stem cells by inhibiting canonical Wnt signaling pathway. The sequence is that of Protein shisa-6 from Mus musculus (Mouse).